Consider the following 136-residue polypeptide: Ribosome-binding factor A (136 aa).

Belongs to the RbfA family. As to quaternary structure, monomer. Binds 30S ribosomal subunits, but not 50S ribosomal subunits or 70S ribosomes.

The protein localises to the cytoplasm. One of several proteins that assist in the late maturation steps of the functional core of the 30S ribosomal subunit. Associates with free 30S ribosomal subunits (but not with 30S subunits that are part of 70S ribosomes or polysomes). Required for efficient processing of 16S rRNA. May interact with the 5'-terminal helix region of 16S rRNA. The polypeptide is Ribosome-binding factor A (Rhodopseudomonas palustris (strain BisB5)).